We begin with the raw amino-acid sequence, 472 residues long: Glutamate--tRNA ligase 1 (472 aa).

The 'HIGH' region motif lies at 13–23 (PSPTGYLHIGG). Residues Cys102, Cys104, Cys129, and Glu131 each coordinate Zn(2+). Residues 239 to 243 (RLSKR) carry the 'KMSKS' region motif. Position 242 (Lys242) interacts with ATP.

The protein belongs to the class-I aminoacyl-tRNA synthetase family. Glutamate--tRNA ligase type 1 subfamily. Monomer. The cofactor is Zn(2+).

It is found in the cytoplasm. The catalysed reaction is tRNA(Glu) + L-glutamate + ATP = L-glutamyl-tRNA(Glu) + AMP + diphosphate. Functionally, catalyzes the attachment of glutamate to tRNA(Glu) in a two-step reaction: glutamate is first activated by ATP to form Glu-AMP and then transferred to the acceptor end of tRNA(Glu). The sequence is that of Glutamate--tRNA ligase 1 from Syntrophus aciditrophicus (strain SB).